Reading from the N-terminus, the 67-residue chain is Alpha-like toxin Lqh3 (67 aa).

The 65-residue stretch at 2-66 (RDGYIAQPEN…GIIVEGEKCH (65 aa)) folds into the LCN-type CS-alpha/beta domain. Cystine bridges form between C12–C65, C16–C37, C23–C47, and C27–C49. Position 67 is a serine amide (S67).

It belongs to the long (4 C-C) scorpion toxin superfamily. Sodium channel inhibitor family. Alpha subfamily. Monomer. In terms of tissue distribution, expressed by the venom gland.

The protein localises to the secreted. Alpha toxins bind voltage-independently at site-3 of sodium channels (Nav) and inhibit the inactivation of the activated channels, thereby blocking neuronal transmission. The dissociation is voltage-dependent. This alpha-like toxin is highly toxic to insects and competes with LqhaIT on binding to insect sodium channels. Differs from classical anti-mammalian alpha-toxins as it inhibits sodium channel inactivation in cell bodies of hippocampus brain neurons, on which the anti-mammalian Lqh2 is inactive, and is unable to affect Nav1.2 in the rat brain, on which Lqh2 is highly active. Moreover, its pharmacological properties are unique in that its binding affinity for insect channels drops &gt;30-fold at pH 8.5 versus pH 6.5, and its rate of association with receptor site-3 on both insect and mammalian sodium channels is 4-15-fold slower compared with LqhaIT and Lqh2. The protein is Alpha-like toxin Lqh3 of Leiurus hebraeus (Hebrew deathstalker scorpion).